Consider the following 249-residue polypeptide: MEFRVIIPARFDSTRLPGKALVDIAGKPMIQHVYESAIKSGAEEVVIATDDKRIRQVAEDFGAVVCMTSSDHQSGTERIAEAAVALGFEDDEIIVCLQGDEPLIPPDAIRKLAEDLDEHDNVKVASLCTPITEVDELFNPHSTKVVLNRRNYALYFSHAPIPWGRDTFSDKENLQLNGSHYCHVGIYAYRVGFLEEYLSWDACPAEKMEALEQLRILWHGGRIHMVVAKSKCPPGVDTEEDLERVRAYF.

It belongs to the KdsB family.

Its subcellular location is the cytoplasm. It carries out the reaction 3-deoxy-alpha-D-manno-oct-2-ulosonate + CTP = CMP-3-deoxy-beta-D-manno-octulosonate + diphosphate. The protein operates within nucleotide-sugar biosynthesis; CMP-3-deoxy-D-manno-octulosonate biosynthesis; CMP-3-deoxy-D-manno-octulosonate from 3-deoxy-D-manno-octulosonate and CTP: step 1/1. It participates in bacterial outer membrane biogenesis; lipopolysaccharide biosynthesis. Activates KDO (a required 8-carbon sugar) for incorporation into bacterial lipopolysaccharide in Gram-negative bacteria. This chain is 3-deoxy-manno-octulosonate cytidylyltransferase, found in Coxiella burnetii (strain RSA 331 / Henzerling II).